We begin with the raw amino-acid sequence, 374 residues long: Tryptophan--tRNA ligase (374 aa).

A 'HIGH' region motif is present at residues 71 to 79; that stretch reads PSGRMHLGH. Positions 247-251 match the 'KMSKS' region motif; it reads KMSSS.

The protein belongs to the class-I aminoacyl-tRNA synthetase family.

Its subcellular location is the cytoplasm. The catalysed reaction is tRNA(Trp) + L-tryptophan + ATP = L-tryptophyl-tRNA(Trp) + AMP + diphosphate + H(+). The protein is Tryptophan--tRNA ligase of Methanopyrus kandleri (strain AV19 / DSM 6324 / JCM 9639 / NBRC 100938).